A 31-amino-acid chain; its full sequence is Conotoxin pc6d (31 aa).

3 disulfides stabilise this stretch: Cys-2–Cys-20, Cys-9–Cys-25, and Cys-19–Cys-29.

Belongs to the conotoxin O1 superfamily. In terms of tissue distribution, expressed by the venom duct.

Its subcellular location is the secreted. In Conus pictus (Cone snail), this protein is Conotoxin pc6d.